The primary structure comprises 71 residues: Plasticin-C2 (71 aa).

An N-terminal signal peptide occupies residues 1–22 (MAFLKKSLLLVLFLALVPLSIC). A propeptide spanning residues 23–45 (EEEKREEEDEEKQEDDDQSENKR) is cleaved from the precursor. The interval 25–46 (EKREEEDEEKQEDDDQSENKRG) is disordered. Acidic residues predominate over residues 26-40 (KREEEDEEKQEDDDQ). At N68 the chain carries Asparagine amide. Positions 70-71 (ES) are excised as a propeptide.

Belongs to the frog skin active peptide (FSAP) family. Plasticin subfamily. Expressed by the skin glands.

The protein resides in the secreted. It localises to the target cell membrane. Neutral peptide with no antimicrobial activity. May act in synergy with cationic peptides by enhancing their activity. Has a moderate hemolytic activity. This is Plasticin-C2 from Agalychnis callidryas (Red-eyed tree frog).